The following is a 251-amino-acid chain: PF03932 family protein CutC (251 aa).

The protein belongs to the CutC family.

It localises to the cytoplasm. The protein is PF03932 family protein CutC of Bacteroides fragilis (strain ATCC 25285 / DSM 2151 / CCUG 4856 / JCM 11019 / LMG 10263 / NCTC 9343 / Onslow / VPI 2553 / EN-2).